Consider the following 153-residue polypeptide: Glucose-6-phosphate 1-dehydrogenase (153 aa).

2 residues coordinate NADP(+): Arg-21 and Lys-120. A D-glucose 6-phosphate-binding site is contributed by Lys-120.

It belongs to the glucose-6-phosphate dehydrogenase family.

The protein localises to the cytoplasm. It is found in the cytosol. The catalysed reaction is D-glucose 6-phosphate + NADP(+) = 6-phospho-D-glucono-1,5-lactone + NADPH + H(+). Its pathway is carbohydrate degradation; pentose phosphate pathway; D-ribulose 5-phosphate from D-glucose 6-phosphate (oxidative stage): step 1/3. Its function is as follows. Cytosolic glucose-6-phosphate dehydrogenase that catalyzes the first and rate-limiting step of the oxidative branch within the pentose phosphate pathway/shunt, an alternative route to glycolysis for the dissimilation of carbohydrates and a major source of reducing power and metabolic intermediates for fatty acid and nucleic acid biosynthetic processes. In Sarcophaga bullata (Grey flesh fly), this protein is Glucose-6-phosphate 1-dehydrogenase (ZW).